The chain runs to 201 residues: Peroxiredoxin 2 (201 aa).

One can recognise a Thioredoxin domain in the interval 3 to 156 (VYLGKRAPDF…ILRSVKALQA (154 aa)). The Cysteine sulfenic acid (-SOH) intermediate role is filled by Cys-44. Arg-119 provides a ligand contact to substrate.

The protein belongs to the peroxiredoxin family. Prx6 subfamily. As to quaternary structure, homodecamer. Pentamer of dimers that assemble into a ring structure.

It localises to the cytoplasm. The catalysed reaction is a hydroperoxide + [thioredoxin]-dithiol = an alcohol + [thioredoxin]-disulfide + H2O. Functionally, thiol-specific peroxidase that catalyzes the reduction of hydrogen peroxide and organic hydroperoxides to water and alcohols, respectively. Plays a role in cell protection against oxidative stress by detoxifying peroxides. The sequence is that of Peroxiredoxin 2 from Picrophilus torridus (strain ATCC 700027 / DSM 9790 / JCM 10055 / NBRC 100828 / KAW 2/3).